The chain runs to 430 residues: Bone morphogenetic protein 7 (430 aa).

The N-terminal stretch at 1 to 29 (MHVRSLRAAAPHSFVALWAPLFLLRSALA) is a signal peptide. The propeptide occupies 30-291 (DFSLDNEVHS…ATEVHLRSIR (262 aa)). Residues asparagine 186, asparagine 301, asparagine 320, and asparagine 371 are each glycosylated (N-linked (GlcNAc...) asparagine). Residues 290-310 (IRSTGGKQRSQNRSKTPKNQE) form a disordered region. 3 cysteine pairs are disulfide-bonded: cysteine 329–cysteine 395, cysteine 358–cysteine 427, and cysteine 362–cysteine 429.

It belongs to the TGF-beta family. In terms of assembly, homodimer; disulfide-linked. Interacts with SOSTDC1. Interacts with TWSG1. Interacts with FBN1 (via N-terminal domain) and FBN2. Interacts with type I receptor ACVR1. Interacts with type II receptor ACVR2A. Interacts with NOG; this interaction inhibits canonical BMP signaling. Interacts with SCUBE3. Interacts with ERFE; the interaction inhibits BMP-induced transcription of HAMP. Interacts with TGFBR3.

Its subcellular location is the secreted. Growth factor of the TGF-beta superfamily that plays important role in various biological processes, including embryogenesis, hematopoiesis, neurogenesis and skeletal morphogenesis. Initiates the canonical BMP signaling cascade by associating with type I receptor ACVR1 and type II receptor ACVR2A. Once all three components are bound together in a complex at the cell surface, ACVR2A phosphorylates and activates ACVR1. In turn, ACVR1 propagates signal by phosphorylating SMAD1/5/8 that travel to the nucleus and act as activators and repressors of transcription of target genes. For specific functions such as growth cone collapse in developing spinal neurons and chemotaxis of monocytes, also uses BMPR2 as type II receptor. Can also signal through non-canonical pathways such as P38 MAP kinase signaling cascade that promotes brown adipocyte differentiation through activation of target genes, including members of the SOX family of transcription factors. Promotes the expression of HAMP, this is repressed by its interaction with ERFE. The protein is Bone morphogenetic protein 7 (Bmp7) of Mus musculus (Mouse).